A 337-amino-acid polypeptide reads, in one-letter code: MTGMAKPLALTLGEPAGIGPDIALAAWLKREQHGLPPFYLLGDAGCLSRCAKLLGLDVPLAEVKAEDAAAAFATTLPVVSTGQIATATPGQPDATSAPAAIASIEHAVADVRSGRAAAVVTNPIAKSVLYQAGFHHPGHTEFLAELAKRDGIVPQPVMMLWCPALAVVPVTIHVSLRDAITQLTTDLIVSTARIVVKDLRERLGIAQPRLALAGLNPHAGEDGALGQEDRAVVAPAVAILRREGVDARGPLPADTMFHAAARKTYDCAICMYHDQALIPIKTIAFDEGVNVTLGLPFIRTSPDHGTAFDIAGSGQANPSSLIAALKLAAQMASAKTA.

2 residues coordinate substrate: histidine 139 and threonine 140. A divalent metal cation contacts are provided by histidine 173, histidine 218, and histidine 273. 3 residues coordinate substrate: lysine 281, asparagine 290, and arginine 299.

Belongs to the PdxA family. In terms of assembly, homodimer. Zn(2+) serves as cofactor. It depends on Mg(2+) as a cofactor. The cofactor is Co(2+).

The protein resides in the cytoplasm. It carries out the reaction 4-(phosphooxy)-L-threonine + NAD(+) = 3-amino-2-oxopropyl phosphate + CO2 + NADH. The protein operates within cofactor biosynthesis; pyridoxine 5'-phosphate biosynthesis; pyridoxine 5'-phosphate from D-erythrose 4-phosphate: step 4/5. In terms of biological role, catalyzes the NAD(P)-dependent oxidation of 4-(phosphooxy)-L-threonine (HTP) into 2-amino-3-oxo-4-(phosphooxy)butyric acid which spontaneously decarboxylates to form 3-amino-2-oxopropyl phosphate (AHAP). The chain is 4-hydroxythreonine-4-phosphate dehydrogenase from Rhodopseudomonas palustris (strain ATCC BAA-98 / CGA009).